The primary structure comprises 314 residues: MEDKNQTVVTEFLLLGLTDHPYQKIVLFFMFLFVYLITLGGNLGMITLIWIDPRLHTPMYFFLRHLSFVDICSSSSVVPKMLCNIFAEKKDITFLGCAAQMWFFGLFEAAECFLLAAMAYDRYVAICKPLLYTLIMSQQVCMQLVVGPYAMALISTMTHTIFTFCLPFCGSNIINHFFCDIFPLLSLACADTWVNKFVLFVLAGAIGVLSGLIIMVSYICILMTILKIQTADGKQKAFFTCFSHLAAVSILYGTLFLIYVRPSSSSSLGIYKVISLFYTVVIPMVNPLIYSLRNKEVKDAFRRKIERKKFIIGR.

The Extracellular segment spans residues 1–24; that stretch reads MEDKNQTVVTEFLLLGLTDHPYQK. Asn-5 carries N-linked (GlcNAc...) asparagine glycosylation. A helical transmembrane segment spans residues 25–45; it reads IVLFFMFLFVYLITLGGNLGM. Residues 46–97 are Cytoplasmic-facing; sequence ITLIWIDPRLHTPMYFFLRHLSFVDICSSSSVVPKMLCNIFAEKKDITFLGC. Cys-97 and Cys-179 are disulfide-bonded. A helical membrane pass occupies residues 98–118; sequence AAQMWFFGLFEAAECFLLAAM. The Extracellular portion of the chain corresponds to 119–143; that stretch reads AYDRYVAICKPLLYTLIMSQQVCMQ. The helical transmembrane segment at 144–164 threads the bilayer; it reads LVVGPYAMALISTMTHTIFTF. The Cytoplasmic segment spans residues 165-167; it reads CLP. The helical transmembrane segment at 168 to 188 threads the bilayer; that stretch reads FCGSNIINHFFCDIFPLLSLA. The Extracellular segment spans residues 189 to 196; that stretch reads CADTWVNK. A helical transmembrane segment spans residues 197–217; that stretch reads FVLFVLAGAIGVLSGLIIMVS. Over 218-237 the chain is Cytoplasmic; the sequence is YICILMTILKIQTADGKQKA. The chain crosses the membrane as a helical span at residues 238-258; the sequence is FFTCFSHLAAVSILYGTLFLI. At 259-268 the chain is on the extracellular side; the sequence is YVRPSSSSSL. Residues 269–289 traverse the membrane as a helical segment; sequence GIYKVISLFYTVVIPMVNPLI. Topologically, residues 290–314 are cytoplasmic; sequence YSLRNKEVKDAFRRKIERKKFIIGR.

The protein belongs to the G-protein coupled receptor 1 family.

It is found in the cell membrane. Functionally, odorant receptor. The sequence is that of Olfactory receptor 5G3 (OR5G3) from Homo sapiens (Human).